Here is a 199-residue protein sequence, read N- to C-terminus: Large ribosomal subunit protein bL25 (199 aa).

It belongs to the bacterial ribosomal protein bL25 family. CTC subfamily. As to quaternary structure, part of the 50S ribosomal subunit; part of the 5S rRNA/L5/L18/L25 subcomplex. Contacts the 5S rRNA. Binds to the 5S rRNA independently of L5 and L18.

In terms of biological role, this is one of the proteins that binds to the 5S RNA in the ribosome where it forms part of the central protuberance. This chain is Large ribosomal subunit protein bL25, found in Pelodictyon phaeoclathratiforme (strain DSM 5477 / BU-1).